A 147-amino-acid chain; its full sequence is Hemoglobin subunit gamma (147 aa).

The region spanning 3–147 is the Globin domain; the sequence is HFTAEEKAAI…VATALAHKYH (145 aa). Positions 64 and 93 each coordinate heme b.

The protein belongs to the globin family. In terms of assembly, heterotetramer of two alpha chains and two gamma chains. As to expression, red blood cells.

Functionally, this protein functions as an embryonic globin, but the gene structure and chromosomal location resemble more closely the human gamma chain gene, which codes for a fetal globin. The protein is Hemoglobin subunit gamma (HBG) of Oryctolagus cuniculus (Rabbit).